Here is a 500-residue protein sequence, read N- to C-terminus: UDP-GalNAc:beta-1,3-N-acetylgalactosaminyltransferase 2 (500 aa).

Over 1–6 (MRNWLV) the chain is Cytoplasmic. The chain crosses the membrane as a helical; Signal-anchor for type II membrane protein span at residues 7 to 23 (LLCPCVLGAALHLWLRL). Over 24–500 (RSPPPACASG…CGDPCRCQAR (477 aa)) the chain is Lumenal. Asparagine 116 and asparagine 174 each carry an N-linked (GlcNAc...) asparagine glycan.

Belongs to the glycosyltransferase 31 family. In terms of processing, N-glycosylated. As to expression, expressed in all tissues examined, but at highest levels in testis, adipose tissue, skeletal muscle and ovary.

It is found in the golgi apparatus membrane. The protein localises to the endoplasmic reticulum. It carries out the reaction 3-O-(N-acetyl-beta-D-glucosaminyl-(1-&gt;4)-alpha-D-mannosyl)-L-threonyl-[protein] + UDP-N-acetyl-alpha-D-galactosamine = 3-O-[beta-D-GalNAc-(1-&gt;3)-beta-D-GlcNAc-(1-&gt;4)-alpha-D-Man]-L-Thr-[protein] + UDP + H(+). It functions in the pathway protein modification; protein glycosylation. In terms of biological role, beta-1,3-N-acetylgalactosaminyltransferase that synthesizes a unique carbohydrate structure, GalNAc-beta-1-3GlcNAc, on N- and O-glycans. Has no galactose nor galactosaminyl transferase activity toward any acceptor substrate. Involved in alpha-dystroglycan (DAG1) glycosylation: acts coordinately with GTDC2/POMGnT2 to synthesize a GalNAc-beta3-GlcNAc-beta-terminus at the 4-position of protein O-mannose in the biosynthesis of the phosphorylated O-mannosyl trisaccharide (N-acetylgalactosamine-beta-3-N-acetylglucosamine-beta-4-(phosphate-6-)mannose), a carbohydrate structure present in alpha-dystroglycan, which is required for binding laminin G-like domain-containing extracellular proteins with high affinity. This is UDP-GalNAc:beta-1,3-N-acetylgalactosaminyltransferase 2 (B3GALNT2) from Homo sapiens (Human).